A 320-amino-acid chain; its full sequence is Ferrochelatase (320 aa).

Positions 194 and 275 each coordinate Fe cation.

This sequence belongs to the ferrochelatase family. Monomer.

The protein resides in the cytoplasm. The catalysed reaction is heme b + 2 H(+) = protoporphyrin IX + Fe(2+). The protein operates within porphyrin-containing compound metabolism; protoheme biosynthesis; protoheme from protoporphyrin-IX: step 1/1. Functionally, catalyzes the ferrous insertion into protoporphyrin IX. The chain is Ferrochelatase from Escherichia coli O81 (strain ED1a).